A 319-amino-acid polypeptide reads, in one-letter code: Ribose-phosphate pyrophosphokinase (319 aa).

ATP contacts are provided by residues 40–42 (DGE) and 99–100 (RQ). Mg(2+) is bound by residues histidine 134 and aspartate 174. Residue lysine 198 is part of the active site. Residues arginine 200, aspartate 224, and 228–232 (DTAGT) each bind D-ribose 5-phosphate.

This sequence belongs to the ribose-phosphate pyrophosphokinase family. Class I subfamily. In terms of assembly, homohexamer. Mg(2+) is required as a cofactor.

Its subcellular location is the cytoplasm. The enzyme catalyses D-ribose 5-phosphate + ATP = 5-phospho-alpha-D-ribose 1-diphosphate + AMP + H(+). It functions in the pathway metabolic intermediate biosynthesis; 5-phospho-alpha-D-ribose 1-diphosphate biosynthesis; 5-phospho-alpha-D-ribose 1-diphosphate from D-ribose 5-phosphate (route I): step 1/1. Its function is as follows. Involved in the biosynthesis of the central metabolite phospho-alpha-D-ribosyl-1-pyrophosphate (PRPP) via the transfer of pyrophosphoryl group from ATP to 1-hydroxyl of ribose-5-phosphate (Rib-5-P). The polypeptide is Ribose-phosphate pyrophosphokinase (Xanthomonas axonopodis pv. citri (strain 306)).